We begin with the raw amino-acid sequence, 410 residues long: BTB/POZ and MATH domain-containing protein 5 (410 aa).

The segment at 1-24 (MSESVIQGSNPDRVLSPTSSKSVT) is disordered. The MATH domain occupies 28 to 162 (NGSHQFVIQG…DDCLIINCTV (135 aa)). Residues 198–264 (SDITFNIAGE…MYKDSLPEDV (67 aa)) enclose the BTB domain.

The protein belongs to the Tdpoz family. Heterodimer with BPM1 and BPM3. Interacts with RAP2-4. Binds to MYB56 at the promoter of FLOWERING LOCUS T (FT). In terms of tissue distribution, ubiquitous.

The protein resides in the nucleus. It localises to the cytoplasm. The protein operates within protein modification; protein ubiquitination. May act as a substrate-specific adapter of an E3 ubiquitin-protein ligase complex (CUL3-RBX1-BTB) which mediates the ubiquitination and subsequent proteasomal degradation of target proteins. This is BTB/POZ and MATH domain-containing protein 5 (BPM5) from Arabidopsis thaliana (Mouse-ear cress).